The primary structure comprises 187 residues: MMLLDLEEKTRVLIEDIVERSAIGSGSIFVLGLSSSEVIGGIIGKASSREIGQRIVKTILEVLEPKGIYLAVQGCEHLNRALVVERELALAKDLEIVNVLPTLHAGGSGQLAAFDYMEDPVEVEEILAQAGIDIGDTSIGMHVKRVQVPLRPIISELGGAHVTALASRPKLIGGARAEYLADPIRKN.

The protein belongs to the UPF0340 family.

The protein is UPF0340 protein str1894 of Streptococcus thermophilus (strain CNRZ 1066).